The sequence spans 375 residues: GTPase HflX (375 aa).

Residues 194-371 form the Hflx-type G domain; sequence PHIAIVGYAS…RIATLLAGTK (178 aa). GTP is bound by residues 200–207, 225–229, 246–249, 314–317, and 349–351; these read GYASAGKT, FTTIT, DTVG, NKID, and SAK. Residues T207 and T227 each contribute to the Mg(2+) site.

This sequence belongs to the TRAFAC class OBG-HflX-like GTPase superfamily. HflX GTPase family. In terms of assembly, monomer. Associates with the 50S ribosomal subunit. Mg(2+) is required as a cofactor.

It is found in the cytoplasm. In terms of biological role, GTPase that associates with the 50S ribosomal subunit and may have a role during protein synthesis or ribosome biogenesis. This is GTPase HflX from Hyperthermus butylicus (strain DSM 5456 / JCM 9403 / PLM1-5).